Consider the following 429-residue polypeptide: Histidinol dehydrogenase (429 aa).

Tyr130, Gln191, and Asn214 together coordinate NAD(+). Substrate is bound by residues Ser237, Gln259, and His262. Zn(2+)-binding residues include Gln259 and His262. Active-site proton acceptor residues include Glu327 and His328. His328, Asp361, Glu415, and His420 together coordinate substrate. A Zn(2+)-binding site is contributed by Asp361. His420 serves as a coordination point for Zn(2+).

It belongs to the histidinol dehydrogenase family. Requires Zn(2+) as cofactor.

It catalyses the reaction L-histidinol + 2 NAD(+) + H2O = L-histidine + 2 NADH + 3 H(+). The protein operates within amino-acid biosynthesis; L-histidine biosynthesis; L-histidine from 5-phospho-alpha-D-ribose 1-diphosphate: step 9/9. Its function is as follows. Catalyzes the sequential NAD-dependent oxidations of L-histidinol to L-histidinaldehyde and then to L-histidine. The sequence is that of Histidinol dehydrogenase from Neisseria meningitidis serogroup B (strain ATCC BAA-335 / MC58).